Here is a 432-residue protein sequence, read N- to C-terminus: Glutamyl-tRNA reductase (432 aa).

Residues 50–53 (TCNR), serine 110, 115–117 (ETQ), and glutamine 121 contribute to the substrate site. Cysteine 51 acts as the Nucleophile in catalysis. 190–195 (GAGEMS) contributes to the NADP(+) binding site.

The protein belongs to the glutamyl-tRNA reductase family. Homodimer.

The catalysed reaction is (S)-4-amino-5-oxopentanoate + tRNA(Glu) + NADP(+) = L-glutamyl-tRNA(Glu) + NADPH + H(+). The protein operates within porphyrin-containing compound metabolism; protoporphyrin-IX biosynthesis; 5-aminolevulinate from L-glutamyl-tRNA(Glu): step 1/2. In terms of biological role, catalyzes the NADPH-dependent reduction of glutamyl-tRNA(Glu) to glutamate 1-semialdehyde (GSA). This chain is Glutamyl-tRNA reductase, found in Aliarcobacter butzleri (strain RM4018) (Arcobacter butzleri).